A 426-amino-acid chain; its full sequence is D-tagatose-1,6-bisphosphate aldolase subunit KbaZ (426 aa).

Belongs to the GatZ/KbaZ family. KbaZ subfamily. As to quaternary structure, forms a complex with KbaY.

It participates in carbohydrate metabolism; D-tagatose 6-phosphate degradation; D-glyceraldehyde 3-phosphate and glycerone phosphate from D-tagatose 6-phosphate: step 2/2. Component of the tagatose-1,6-bisphosphate aldolase KbaYZ that is required for full activity and stability of the Y subunit. Could have a chaperone-like function for the proper and stable folding of KbaY. When expressed alone, KbaZ does not show any aldolase activity. The polypeptide is D-tagatose-1,6-bisphosphate aldolase subunit KbaZ (Escherichia coli O139:H28 (strain E24377A / ETEC)).